A 20-amino-acid polypeptide reads, in one-letter code: Hemoglobinase-like protein 1 (20 aa).

Belongs to the peptidase C13 family.

The enzyme catalyses Hydrolysis of proteins and small molecule substrates at -Asn-|-Xaa- bonds.. In Fasciola hepatica (Liver fluke), this protein is Hemoglobinase-like protein 1.